Consider the following 89-residue polypeptide: Small ribosomal subunit protein uS15 (89 aa).

The segment at 1–25 (MSLSAEQKGEIVKKHARTASDTGSP) is disordered.

The protein belongs to the universal ribosomal protein uS15 family. In terms of assembly, part of the 30S ribosomal subunit. Forms a bridge to the 50S subunit in the 70S ribosome, contacting the 23S rRNA.

One of the primary rRNA binding proteins, it binds directly to 16S rRNA where it helps nucleate assembly of the platform of the 30S subunit by binding and bridging several RNA helices of the 16S rRNA. Functionally, forms an intersubunit bridge (bridge B4) with the 23S rRNA of the 50S subunit in the ribosome. This chain is Small ribosomal subunit protein uS15, found in Alkalilimnicola ehrlichii (strain ATCC BAA-1101 / DSM 17681 / MLHE-1).